Here is a 142-residue protein sequence, read N- to C-terminus: Large ribosomal subunit protein uL11 (142 aa).

This sequence belongs to the universal ribosomal protein uL11 family. Part of the ribosomal stalk of the 50S ribosomal subunit. Interacts with L10 and the large rRNA to form the base of the stalk. L10 forms an elongated spine to which L12 dimers bind in a sequential fashion forming a multimeric L10(L12)X complex. Post-translationally, one or more lysine residues are methylated.

Its function is as follows. Forms part of the ribosomal stalk which helps the ribosome interact with GTP-bound translation factors. In Aliivibrio fischeri (strain MJ11) (Vibrio fischeri), this protein is Large ribosomal subunit protein uL11.